The primary structure comprises 164 residues: MVNSVVFFEITRDGKPLGRISIKLFADKIPKTAENFRALSTGEKGFRYKGSCFHRIIPGFMCQGGDFTRPNGTGDKSIYGEKFDDENLIRKHTGSGILSMANAGPNTNGSQFFICAAKTEWLDGKHVAFGKVKERVNIVEAMEHFGYRNSKTSKKITIADCGQF.

The 157-residue stretch at 7–163 (FFEITRDGKP…KKITIADCGQ (157 aa)) folds into the PPIase cyclophilin-type domain.

The protein belongs to the cyclophilin-type PPIase family. PPIase A subfamily.

The protein resides in the cytoplasm. It carries out the reaction [protein]-peptidylproline (omega=180) = [protein]-peptidylproline (omega=0). In terms of biological role, PPIases accelerate the folding of proteins. It catalyzes the cis-trans isomerization of proline imidic peptide bonds in oligopeptides. This chain is Peptidyl-prolyl cis-trans isomerase A-like 4F, found in Homo sapiens (Human).